The primary structure comprises 233 residues: Protein Atu3128 (233 aa).

Belongs to the glycosyl hydrolase 88 family.

In terms of biological role, seems to regulate the surface properties of the bacterium in the presence of plant cells or plant cell extracts. Mutations in this protein are responsible for an increased aggregation of the bacteria in the presence of pea root cap cells. This is Protein Atu3128 from Agrobacterium fabrum (strain C58 / ATCC 33970) (Agrobacterium tumefaciens (strain C58)).